Reading from the N-terminus, the 1463-residue chain is Probable ATP-dependent RNA helicase spindle-E (1463 aa).

In terms of domain architecture, Helicase ATP-binding spans 131-296 (LKAIRENPVV…FKIPGPNSLF (166 aa)). 144–151 (GMTGCGKT) serves as a coordination point for ATP. The DEAH box signature appears at 243–246 (DEVH). Residues 348-531 (VCDRFIDEFE…NVVLKTKLLD (184 aa)) enclose the Helicase C-terminal domain. A Tudor domain is found at 951–1016 (AFKQRDIVAA…QLRGTPLDMF (66 aa)).

This sequence belongs to the DEAD box helicase family. DEAH subfamily.

It localises to the cytoplasm. It catalyses the reaction ATP + H2O = ADP + phosphate + H(+). Its function is as follows. Probable ATP-binding RNA helicase which plays a central role during gametogenesis by repressing transposable elements and preventing their mobilization, which is essential for the germline integrity. Acts via the piRNA metabolic process, which mediates the repression of transposable elements during meiosis by forming complexes composed of piRNAs and Piwi proteins and govern the methylation and subsequent repression of transposons. The chain is Probable ATP-dependent RNA helicase spindle-E (spn-E) from Anopheles gambiae (African malaria mosquito).